The following is a 311-amino-acid chain: Olfactory receptor 5M8 (311 aa).

Residues 1–24 (MRRNCTLVTEFILLGLTSRRELQI) are Extracellular-facing. The N-linked (GlcNAc...) asparagine glycan is linked to Asn4. The chain crosses the membrane as a helical span at residues 25 to 45 (LLFTLFLAIYMVTVAGNLGMI). The Cytoplasmic portion of the chain corresponds to 46–53 (VLIQANAW). The helical transmembrane segment at 54–74 (LHMPMYFFLSHLSFVDLCFSS) threads the bilayer. Topologically, residues 75 to 98 (NVTPKMLEIFLSEKKSISYPACLV) are extracellular. The cysteines at positions 96 and 188 are disulfide-linked. Residues 99–119 (QCYLFIALVHVEIYILAVMAF) form a helical membrane-spanning segment. Residues 120–138 (DRYMAICNPLLYGSRMSKS) lie on the Cytoplasmic side of the membrane. Residues 139–159 (VCSFLITVPYVYGALTGLMET) form a helical membrane-spanning segment. Residues 160 to 195 (MWTYNLAFCGPNEINHFYCADPPLIKLACSDTYNKE) lie on the Extracellular side of the membrane. Residues 196-216 (LSMFIVAGWNLSFSLFIICIS) traverse the membrane as a helical segment. Over 217-236 (YLYIFPAILKIRSTEGRQKA) the chain is Cytoplasmic. The helical transmembrane segment at 237–257 (FSTCGSHLTAVTIFYATLFFM) threads the bilayer. Residues 258-270 (YLRPPSKESVEQG) lie on the Extracellular side of the membrane. Residues 271-291 (KMVAVFYTTVIPMLNLIIYSL) form a helical membrane-spanning segment. Over 292-311 (RNKNVKEALIKELSMKIYFS) the chain is Cytoplasmic.

This sequence belongs to the G-protein coupled receptor 1 family.

Its subcellular location is the cell membrane. Its function is as follows. Odorant receptor. This chain is Olfactory receptor 5M8 (OR5M8), found in Homo sapiens (Human).